We begin with the raw amino-acid sequence, 93 residues long: Co-chaperonin GroES (93 aa).

It belongs to the GroES chaperonin family. In terms of assembly, heptamer of 7 subunits arranged in a ring. Interacts with the chaperonin GroEL.

It is found in the cytoplasm. Functionally, together with the chaperonin GroEL, plays an essential role in assisting protein folding. The GroEL-GroES system forms a nano-cage that allows encapsulation of the non-native substrate proteins and provides a physical environment optimized to promote and accelerate protein folding. GroES binds to the apical surface of the GroEL ring, thereby capping the opening of the GroEL channel. This Streptococcus sanguinis protein is Co-chaperonin GroES.